We begin with the raw amino-acid sequence, 607 residues long: Type 3 secretion system secretin (607 aa).

Residues 1–33 (MAPACTTAHRRRAPLAAVLMLSLLPLLSPHADA) form the signal peptide. The interval 277 to 332 (ASSSDRVPVSPPLPGSGAAAAAGSPASVWPELSKGRRDESNPIDAGGGAELASDAP) is disordered. Over residues 291 to 306 (GSGAAAAAGSPASVWP) the composition is skewed to low complexity.

Belongs to the bacterial secretin family. T3SS SctC subfamily. The core secretion machinery of the T3SS is composed of approximately 20 different proteins, including cytoplasmic components, a base, an export apparatus and a needle. This subunit is part of the base, which anchors the injectisome in the bacterial cell envelope. Forms a stable homooligomeric complex.

The protein resides in the cell outer membrane. Functionally, component of the type III secretion system (T3SS), also called injectisome, which is used to inject bacterial effector proteins into eukaryotic host cells. Forms a ring-shaped multimeric structure with an apparent central pore in the outer membrane. Necessary for both basic pathogenicity and the induction of the hypersensitive response in resistant plants. The polypeptide is Type 3 secretion system secretin (Xanthomonas euvesicatoria).